A 325-amino-acid chain; its full sequence is Brorin (325 aa).

An N-terminal signal peptide occupies residues 1–27; sequence MPSSTAMAVGALSSSLLVTCCLMVALC. The segment at 37–121 is disordered; it reads AQAPEQPGQE…RPRGDTPQAE (85 aa). Composition is skewed to basic and acidic residues over residues 44 to 56 and 64 to 78; these read GQEKREHASRDGP and RPARDEGGSGRDWKS. Residues 114-116 carry the Mediates cell adhesion motif; the sequence is RGD. 2 consecutive VWFC domains span residues 153 to 212 and 216 to 274; these read KGCV…PQCK and NYCE…PICK.

As to quaternary structure, peripherally associated with AMPAR complex. AMPAR complex consists of an inner core made of 4 pore-forming GluA/GRIA proteins (GRIA1, GRIA2, GRIA3 and GRIA4) and 4 major auxiliary subunits arranged in a twofold symmetry. One of the two pairs of distinct binding sites is occupied either by CNIH2, CNIH3 or CACNG2, CACNG3. The other harbors CACNG2, CACNG3, CACNG4, CACNG8 or GSG1L. This inner core of AMPAR complex is complemented by outer core constituents binding directly to the GluA/GRIA proteins at sites distinct from the interaction sites of the inner core constituents. Outer core constituents include at least PRRT1, PRRT2, CKAMP44/SHISA9, FRRS1L and NRN1. The proteins of the inner and outer core serve as a platform for other, more peripherally associated AMPAR constituents, including VWC2. Alone or in combination, these auxiliary subunits control the gating and pharmacology of the AMPAR complex and profoundly impact their biogenesis and protein processing.

Its subcellular location is the secreted. It is found in the extracellular space. It localises to the extracellular matrix. The protein localises to the basement membrane. The protein resides in the synapse. Its function is as follows. BMP antagonist which may play a role in neural development. Promotes cell adhesion. In Homo sapiens (Human), this protein is Brorin (VWC2).